The following is a 1676-amino-acid chain: Protein TIC 214 (1676 aa).

6 helical membrane-spanning segments follow: residues 24–44, 70–90, 93–113, 130–150, 170–190, and 218–238; these read KIINSVILAGLYYGFLTALAL, LILGQLGQFLSIYYAPLYIAF, PYTLTVLTLIYFLVNLFGNNL, LEILCIFLNNLILQLLNTCIF, MVFLISSFSAWLIGQILVLMC, and FFLVVNCLFGSSLFILTIQSL. 2 stretches are compositionally biased toward basic and acidic residues: residues 264-276 and 283-298; these read LKKSGVAKEGKST and SHEKDSFKKEPYSKLE. Disordered stretches follow at residues 264-302, 546-610, 1123-1151, and 1372-1436; these read LKKSGVAKEGKSTEDEEDLSHEKDSFKKEPYSKLENEDE, LVVF…SYSI, NKQSLQKGNSKGNSNLDDSKNRNKNNLIL, and QQQN…SEDD. The segment covering 562 to 586 has biased composition (polar residues); that stretch reads DSGNIQNKSSDKTINPQNNLTNSKT. A compositionally biased stretch (basic and acidic residues) spans 597–610; that stretch reads TTEKEPKDDKSYSI. The segment covering 1123–1138 has biased composition (polar residues); that stretch reads NKQSLQKGNSKGNSNL. Over residues 1372–1390 the composition is skewed to low complexity; sequence QQQNQTTTKINTETKNQQK. A coiled-coil region spans residues 1384–1436; the sequence is ETKNQQKNRVENEENKETENQQNAETKNKQKSKTENEENKETENQQNDESEDD. Basic and acidic residues-rich tracts occupy residues 1391–1402 and 1409–1426; these read NRVENEENKETE and TKNKQKSKTENEENKETE.

This sequence belongs to the TIC214 family. In terms of assembly, part of the Tic complex.

The protein resides in the plastid. Its subcellular location is the chloroplast inner membrane. Involved in protein precursor import into chloroplasts. May be part of an intermediate translocation complex acting as a protein-conducting channel at the inner envelope. The sequence is that of Protein TIC 214 from Cuscuta obtusiflora (Peruvian dodder).